The chain runs to 290 residues: 4-hydroxy-tetrahydrodipicolinate synthase (290 aa).

A pyruvate-binding site is contributed by threonine 48. The active-site Proton donor/acceptor is tyrosine 137. The active-site Schiff-base intermediate with substrate is the lysine 165. Isoleucine 206 lines the pyruvate pocket.

The protein belongs to the DapA family. Homotetramer; dimer of dimers.

It is found in the cytoplasm. The catalysed reaction is L-aspartate 4-semialdehyde + pyruvate = (2S,4S)-4-hydroxy-2,3,4,5-tetrahydrodipicolinate + H2O + H(+). It functions in the pathway amino-acid biosynthesis; L-lysine biosynthesis via DAP pathway; (S)-tetrahydrodipicolinate from L-aspartate: step 3/4. Functionally, catalyzes the condensation of (S)-aspartate-beta-semialdehyde [(S)-ASA] and pyruvate to 4-hydroxy-tetrahydrodipicolinate (HTPA). The polypeptide is 4-hydroxy-tetrahydrodipicolinate synthase (Ligilactobacillus salivarius (strain UCC118) (Lactobacillus salivarius)).